A 323-amino-acid chain; its full sequence is MGPVELLHMSVFSQSFSPCGRYLAAGNNYGEIAVFSLSAALSPDASERSQKPILNFTAHDGPVFSLLSTESHLLSAGNGEISAWSWAELIKKSTKAAWTRKPNYETSLEIPEINAMIINPKDNNLIVGGGDNNIHIMDMETGTFKSVLKGHTDYIHCLSFKEREGEILSGGEDGAVRIWDSRTNRPVHCIEVFKYEECARPQFGKWISCLATDSDWMLCGGGPSLSLWHLRSMSPTSVFPLSGCQREAVSYQDLIMSVGEGPYVSHCLHGGTVKAQIPCSPSSLNTLALNLKNTEHRVMTVGGSSHQIDVFTNFSYRALSLSF.

6 WD repeats span residues 6–45 (LLHMSVFSQSFSPCGRYLAAGNNYGEIAVFSLSAALSPDA), 58–96 (AHDGPVFSLLSTESHLLSAGNGEISAWSWAELIKKSTKA), 108–147 (LEIPEINAMIINPKDNNLIVGGGDNNIHIMDMETGTFKSV), 150–189 (GHTDYIHCLSFKEREGEILSGGEDGAVRIWDSRTNRPVHC), 200–238 (RPQFGKWISCLATDSDWMLCGGGPSLSLWHLRSMSPTSV), and 279–321 (CSPS…ALSL).

The protein belongs to the WD repeat THOC6 family. Component of the THO subcomplex, which is composed of thoc1, thoc2, thoc3, thoc5, thoc6 and thoc7. Component of the transcription/export (TREX) complex at least composed of alyref/thoc4, ddx39b, sarnp/cip29, chtop and the THO subcomplex.

The protein resides in the nucleus. It localises to the nucleus speckle. Component of the THO subcomplex of the TREX complex which is thought to couple mRNA transcription, processing and nuclear export, and which specifically associates with spliced mRNA and not with unspliced pre-mRNA. Plays a key structural role in the oligomerization of the THO-DDX39B complex. TREX is recruited to spliced mRNAs by a transcription-independent mechanism, binds to mRNA upstream of the exon-junction complex (EJC) and is recruited in a splicing- and cap-dependent manner to a region near the 5' end of the mRNA where it functions in mRNA export to the cytoplasm via the TAP/NXF1 pathway. Plays a role in apoptosis negative control involved in brain development. The sequence is that of THO complex subunit 6 homolog (thoc6) from Danio rerio (Zebrafish).